The following is a 378-amino-acid chain: Protein FAM170B (378 aa).

3 disordered regions span residues 1–56, 244–265, and 277–378; these read MKHH…LPDD, TRDQKQDQQPVEEEQSLSDSSE, and QQQP…QQGK. Low complexity-rich tracts occupy residues 277–339 and 349–378; these read QQQP…QPLQ and PQKQQQRQQQRQQQPPRQQQKQQPLQQQGK.

This sequence belongs to the FAM170 family. Interacts with GOPC. As to expression, exclusively expressed in adult testis (at protein level). Expression first started at postnatal week 3 in round spermatids, elongated spermatids and mature sperm.

Its subcellular location is the cytoplasmic vesicle. It is found in the secretory vesicle. The protein localises to the acrosome. The protein resides in the acrosome outer membrane. Plays a role in fertilization through the acrosome reaction. The polypeptide is Protein FAM170B (Mus musculus (Mouse)).